The following is a 349-amino-acid chain: MTDPSRLVTPERRGDDLGDAALRPQNLSEFVGQQQARANLQVFIDAARKRKEALDHVLFVGPPGLGKTTLAQIVARELGVGFRATSGPVIAKAGDLAALLTNLEERDVLFIDEIHRLSPSVEEVLYPAMEDFQLDLIIGEGPAARSVKIDLSKFTLVGATTRAGLLTNPLRDRFGIPIRLNFYTIEELESIVTRGARVLGTPITADGANEIARRARGTPRIAGRLLRRVRDFASAADAEAIDRAIADHALGALEVDSAGLDAMDRRYLTTIALNYGGGPVGVETMAAALSEPRDAIEDIIEPYLIQCGYLQRTPRGRLLTDHAFRHLGLAAPSRDPAQFGLFGDTGDQE.

A large ATPase domain (RuvB-L) region spans residues Met-1 to Tyr-183. ATP-binding positions include Leu-22, Arg-23, Gly-64, Lys-67, Thr-68, Thr-69, Glu-130 to Phe-132, Arg-173, Tyr-183, and Arg-220. Thr-68 contributes to the Mg(2+) binding site. The segment at Thr-184–Glu-254 is small ATPAse domain (RuvB-S). A head domain (RuvB-H) region spans residues Ser-257–Glu-349. 3 residues coordinate DNA: Arg-293, Arg-312, and Arg-317.

This sequence belongs to the RuvB family. In terms of assembly, homohexamer. Forms an RuvA(8)-RuvB(12)-Holliday junction (HJ) complex. HJ DNA is sandwiched between 2 RuvA tetramers; dsDNA enters through RuvA and exits via RuvB. An RuvB hexamer assembles on each DNA strand where it exits the tetramer. Each RuvB hexamer is contacted by two RuvA subunits (via domain III) on 2 adjacent RuvB subunits; this complex drives branch migration. In the full resolvosome a probable DNA-RuvA(4)-RuvB(12)-RuvC(2) complex forms which resolves the HJ.

It localises to the cytoplasm. The catalysed reaction is ATP + H2O = ADP + phosphate + H(+). Functionally, the RuvA-RuvB-RuvC complex processes Holliday junction (HJ) DNA during genetic recombination and DNA repair, while the RuvA-RuvB complex plays an important role in the rescue of blocked DNA replication forks via replication fork reversal (RFR). RuvA specifically binds to HJ cruciform DNA, conferring on it an open structure. The RuvB hexamer acts as an ATP-dependent pump, pulling dsDNA into and through the RuvAB complex. RuvB forms 2 homohexamers on either side of HJ DNA bound by 1 or 2 RuvA tetramers; 4 subunits per hexamer contact DNA at a time. Coordinated motions by a converter formed by DNA-disengaged RuvB subunits stimulates ATP hydrolysis and nucleotide exchange. Immobilization of the converter enables RuvB to convert the ATP-contained energy into a lever motion, pulling 2 nucleotides of DNA out of the RuvA tetramer per ATP hydrolyzed, thus driving DNA branch migration. The RuvB motors rotate together with the DNA substrate, which together with the progressing nucleotide cycle form the mechanistic basis for DNA recombination by continuous HJ branch migration. Branch migration allows RuvC to scan DNA until it finds its consensus sequence, where it cleaves and resolves cruciform DNA. This is Holliday junction branch migration complex subunit RuvB from Rhodopseudomonas palustris (strain ATCC BAA-98 / CGA009).